Reading from the N-terminus, the 1324-residue chain is Ubiquitin carboxyl-terminal hydrolase 42 (1324 aa).

Disordered regions lie at residues 1–38 (MTIVDKASESSDPSAYQNQPGSSEAVSPGDMDAGSASW) and 63–87 (YSSSSVPDKSKPSPQKDQALGDGIA). Polar residues predominate over residues 10 to 25 (SSDPSAYQNQPGSSEA). Residues 63–80 (YSSSSVPDKSKPSPQKDQ) show a composition bias toward low complexity. A Phosphoserine modification is found at serine 75. The USP domain maps to 111–412 (AGLQNLGNTC…QAYVLFYIRS (302 aa)). Catalysis depends on cysteine 120, which acts as the Nucleophile. Histidine 371 (proton acceptor) is an active-site residue. Disordered stretches follow at residues 452–494 (IGPQ…NRAS), 536–707 (QSQP…MPAP), 722–1026 (LSNK…RHRS), 1085–1131 (RAGL…HPDR), 1149–1254 (DRFH…VKDS), and 1275–1294 (GGFPLSGGPPLEGVGPFREK). The segment covering 477 to 489 (PSSSMSSPNGNSS) has biased composition (low complexity). A Phosphoserine modification is found at serine 483. Residues 536 to 564 (QSQPNLHSNSLENPTKPVPSSTITNSAVQ) show a composition bias toward polar residues. Low complexity predominate over residues 565–576 (STSNASTMSVSS). Polar residues predominate over residues 586–603 (ESCSQPVMNGKSKLNSSV). Phosphoserine occurs at positions 754 and 856. Composition is skewed to basic and acidic residues over residues 938-974 (AKEKIGSLRKVDRGHYRSRRERSSSGEPARESRSKTE), 984-1013 (CPRERDRQDRHAPEHHPGHGDRLSPGERRS), 1101-1113 (RGCEPARERERHR), 1149-1158 (DRFHEHENGK), and 1165-1191 (DSVENSDSHVEKKARRSEQKDPLEEPK). Position 1181 is a phosphoserine (serine 1181). Basic residues predominate over residues 1192-1206 (AKKHKKSKKKKKSKD). Residues 1207-1218 (KHRDRDSRHQQD) are compositionally biased toward basic and acidic residues. 3 positions are modified to phosphoserine: serine 1219, serine 1222, and serine 1226. Residues 1231–1245 (HRHKKKKKKKKRHSR) are compositionally biased toward basic residues. Serine 1247 carries the phosphoserine modification.

It belongs to the peptidase C19 family. As to expression, broadly expressed.

The enzyme catalyses Thiol-dependent hydrolysis of ester, thioester, amide, peptide and isopeptide bonds formed by the C-terminal Gly of ubiquitin (a 76-residue protein attached to proteins as an intracellular targeting signal).. In terms of biological role, deubiquitinating enzyme which may play an important role during spermatogenesis. This chain is Ubiquitin carboxyl-terminal hydrolase 42 (USP42), found in Homo sapiens (Human).